The sequence spans 206 residues: Inosine triphosphate pyrophosphatase (206 aa).

21 to 26 (TGNAKK) provides a ligand contact to ITP. Residue glutamate 49 coordinates Mg(2+). ITP contacts are provided by residues lysine 61, 77-78 (DT), lysine 94, 153-156 (FGWD), lysine 176, and 181-182 (HR).

It belongs to the HAM1 NTPase family. As to quaternary structure, homodimer. Mg(2+) is required as a cofactor. Mn(2+) serves as cofactor.

The protein localises to the cytoplasm. It catalyses the reaction ITP + H2O = IMP + diphosphate + H(+). The enzyme catalyses dITP + H2O = dIMP + diphosphate + H(+). The catalysed reaction is XTP + H2O = XMP + diphosphate + H(+). Functionally, pyrophosphatase that hydrolyzes non-canonical purine nucleotides such as inosine triphosphate (ITP), deoxyinosine triphosphate (dITP) or xanthosine 5'-triphosphate (XTP) to their respective monophosphate derivatives. The enzyme does not distinguish between the deoxy- and ribose forms. Probably excludes non-canonical purines from RNA and DNA precursor pools, thus preventing their incorporation into RNA and DNA and avoiding chromosomal lesions. The sequence is that of Inosine triphosphate pyrophosphatase from Vitis vinifera (Grape).